The following is a 461-amino-acid chain: Putative forkhead-related transcription factor fkh-5 (461 aa).

A DNA-binding region (fork-head) is located at residues 171–262 (QRPQLSYQLL…VEKEMIDVKT (92 aa)).

It localises to the nucleus. Transcription factor. Binds to DNA sequence motif 5'-CTGTTTCA-3'. Regulates expression of a class of small RNAs, known as 21U-RNAs, perhaps acting redundantly with fkh-4 and fkh-3. In Caenorhabditis elegans, this protein is Putative forkhead-related transcription factor fkh-5 (fkh-5).